A 119-amino-acid chain; its full sequence is MAWALLLLSLLTQGTGSWAQSALTQPRSVSGSPGQSVTISCTGTSSDVGGYNYVSWYQQHPGKAPKLMIYDVSKRPSGVPDRFSGSKSGNTASLTISGLQAEDEADYYCCSYAGSYTFH.

An N-terminal signal peptide occupies residues 1-19; it reads MAWALLLLSLLTQGTGSWA. Gln-20 carries the post-translational modification Pyrrolidone carboxylic acid. The interval 20-44 is framework-1; sequence QSALTQPRSVSGSPGQSVTISCTGT. The region spanning 20 to 119 is the Ig-like domain; it reads QSALTQPRSV…CSYAGSYTFH (100 aa). Residues Cys-41 and Cys-109 are joined by a disulfide bond. The complementarity-determining-1 stretch occupies residues 45–53; it reads SSDVGGYNY. The segment at 54–70 is framework-2; it reads VSWYQQHPGKAPKLMIY. A complementarity-determining-2 region spans residues 71 to 73; that stretch reads DVS. Residues 74–109 form a framework-3 region; sequence KRPSGVPDRFSGSKSGNTASLTISGLQAEDEADYYC. The interval 110 to 119 is complementarity-determining-3; sequence CSYAGSYTFH.

Immunoglobulins are composed of two identical heavy chains and two identical light chains; disulfide-linked.

Its subcellular location is the secreted. It is found in the cell membrane. In terms of biological role, v region of the variable domain of immunoglobulin light chains that participates in the antigen recognition. Immunoglobulins, also known as antibodies, are membrane-bound or secreted glycoproteins produced by B lymphocytes. In the recognition phase of humoral immunity, the membrane-bound immunoglobulins serve as receptors which, upon binding of a specific antigen, trigger the clonal expansion and differentiation of B lymphocytes into immunoglobulins-secreting plasma cells. Secreted immunoglobulins mediate the effector phase of humoral immunity, which results in the elimination of bound antigens. The antigen binding site is formed by the variable domain of one heavy chain, together with that of its associated light chain. Thus, each immunoglobulin has two antigen binding sites with remarkable affinity for a particular antigen. The variable domains are assembled by a process called V-(D)-J rearrangement and can then be subjected to somatic hypermutations which, after exposure to antigen and selection, allow affinity maturation for a particular antigen. The chain is Immunoglobulin lambda variable 2-11 from Homo sapiens (Human).